The primary structure comprises 406 residues: E3 ubiquitin-protein ligase RING1 (406 aa).

T24 carries the post-translational modification Phosphothreonine. The tract at residues 30 to 234 is necessary for transcriptional repression; the sequence is MDGTEIAVSP…GGAGSEDSGD (205 aa). At S38 the chain carries Phosphoserine. The segment at 48-88 adopts an RING-type zinc-finger fold; that stretch reads CPICLDMLKNTMTTKECLHRFCSDCIVTALRSGNKECPTCR. 3 positions are modified to phosphoserine: S140, S187, and S190. 2 disordered regions span residues 148-263 and 309-354; these read QAMH…GEIE and QQQE…PSLE. Residues 175-187 are compositionally biased toward acidic residues; it reads EPGEGEGDGEDVS. Positions 201–204 match the Nuclear localization signal motif; it reads KRPR. A compositionally biased stretch (gly residues) spans 205-228; the sequence is GGGAGGSSVGTGGGGTGGVGGGAG. A phosphothreonine mark is found at T215 and T220. 2 positions are modified to phosphoserine: S229 and S232. Residues 230–406 are necessary for interaction with CBX2; the sequence is EDSGDRGGTL…LCYAPTKDPK (177 aa). Residues 235 to 244 show a composition bias toward gly residues; sequence RGGTLGGGTL. The span at 246 to 258 shows a compositional bias: pro residues; it reads PPSPPGAPSPPEP. 2 positions are modified to phosphoserine: S248 and S254. Gly residues predominate over residues 315-343; that stretch reads EPGGPGGGASDTGGPDGCGGEGGGAGGGD.

As to quaternary structure, component of chromatin-associated Polycomb (PcG) complexes. Interacts with BMI1. Part of the E2F6.com-1 complex in G0 phase composed of E2F6, MGA, MAX, TFDP1, CBX3, BAT8, EUHMTASE1, RING1, RNF2/RING2 MBLR, L3MBTL2 and YAF2. Interacts with CBX2 and PCGF6. Component of a PRC1-like complex. Component of repressive BCOR complex containing Polycomb group subcomplex at least composed of RYBP, PCGF1, BCOR and RNF2/RING2. Interacts with PCGF2, RNF2; CBX6, CBX7 and CBX8. Interacts with PHC2. Interacts with MN1. Interacts with USP26.

It localises to the nucleus. The protein resides in the nucleus speckle. It catalyses the reaction S-ubiquitinyl-[E2 ubiquitin-conjugating enzyme]-L-cysteine + [acceptor protein]-L-lysine = [E2 ubiquitin-conjugating enzyme]-L-cysteine + N(6)-ubiquitinyl-[acceptor protein]-L-lysine.. Its pathway is protein modification; protein ubiquitination. In terms of biological role, constitutes one of the E3 ubiquitin-protein ligases that mediate monoubiquitination of 'Lys-119' of histone H2A, thereby playing a central role in histone code and gene regulation. H2A 'Lys-119' ubiquitination gives a specific tag for epigenetic transcriptional repression and participates in X chromosome inactivation of female mammals. Essential component of a Polycomb group (PcG) multiprotein PRC1-like complex, a complex class required to maintain the transcriptionally repressive state of many genes, including Hox genes, throughout development. PcG PRC1 complex acts via chromatin remodeling and modification of histones, rendering chromatin heritably changed in its expressibility. Compared to RNF2/RING2, it does not have the main E3 ubiquitin ligase activity on histone H2A, and it may rather act as a modulator of RNF2/RING2 activity. The protein is E3 ubiquitin-protein ligase RING1 of Homo sapiens (Human).